A 175-amino-acid polypeptide reads, in one-letter code: Dof zinc finger protein DOF1.5 (175 aa).

Positions 29–57 (EEQQQQQQPELQATTAVRSPSSDLTAEKR) are disordered. Residues 37–52 (PELQATTAVRSPSSDL) are compositionally biased toward polar residues. A Dof-type zinc finger spans residues 62–116 (IPCPRCKSMETKFCYFNNYNVNQPRHFCKGCQRYWTAGGALRNVPVGAGRRKSKP). Positions 64, 67, 89, and 92 each coordinate Zn(2+). The Nuclear localization signal signature appears at 162–168 (PVKRLRC).

It localises to the nucleus. In terms of biological role, transcription factor that binds specifically to a 5'-AA[AG]G-3' consensus core sequence. Acts as a negative regulator in the phytochrome-mediated light responses. Controls phyB-mediated end-of-day response and the phyA-mediated anthocyanin accumulation. Not involved in direct flowering time regulation. This chain is Dof zinc finger protein DOF1.5 (DOF1.5), found in Arabidopsis thaliana (Mouse-ear cress).